The chain runs to 304 residues: Glycine--tRNA ligase alpha subunit (304 aa).

Belongs to the class-II aminoacyl-tRNA synthetase family. Tetramer of two alpha and two beta subunits.

The protein localises to the cytoplasm. It catalyses the reaction tRNA(Gly) + glycine + ATP = glycyl-tRNA(Gly) + AMP + diphosphate. This is Glycine--tRNA ligase alpha subunit from Actinobacillus pleuropneumoniae serotype 3 (strain JL03).